Consider the following 2602-residue polypeptide: Non-reducing polyketide synthase SAT8 (2602 aa).

Cysteine 130 (nucleophile; for transacylase activity) is an active-site residue. Histidine 249 serves as the catalytic Proton donor/acceptor; for transacylase activity. The tract at residues methionine 379–cysteine 398 is disordered. Low complexity predominate over residues asparagine 382 to serine 396. One can recognise a Ketosynthase family 3 (KS3) domain in the interval proline 404–glutamine 822. Residues cysteine 571, histidine 706, and histidine 745 each act as for beta-ketoacyl synthase activity in the active site. Residues phenylalanine 926 to asparagine 1216 form a malonyl-CoA:ACP transacylase (MAT) region. The segment at glycine 1298–glutamate 1442 is N-terminal hotdog fold. The region spanning glycine 1298–threonine 1618 is the PKS/mFAS DH domain. Residues leucine 1331–serine 1616 are product template (PT) domain. The active-site Proton acceptor; for dehydratase activity is histidine 1335. The interval glycine 1467–threonine 1618 is C-terminal hotdog fold. The active-site Proton donor; for dehydratase activity is aspartate 1524. Residues aspartate 1658–valine 1733 form the Carrier domain. Serine 1692 is subject to O-(pantetheine 4'-phosphoryl)serine. The disordered stretch occupies residues aspartate 1737–serine 1772. Residues threonine 1752–serine 1765 show a composition bias toward low complexity. The segment at valine 1979–glycine 2150 is methyltransferase domain. The segment at isoleucine 2229–valine 2530 is NADPH-binding domain.

Pantetheine 4'-phosphate serves as cofactor.

Its pathway is mycotoxin biosynthesis. In terms of biological role, non-reducing polyketide synthase; part of the satratoxin SC1 cluster involved in the biosynthesis of satratoxins, trichothecene mycotoxins that are associated with human food poisonings. Satratoxins are suggested to be made by products of multiple gene clusters (SC1, SC2 and SC3) that encode 21 proteins in all, including polyketide synthases, acetyltransferases, and other enzymes expected to modify the trichothecene skeleton. SC1 encodes 10 proteins, SAT1 to SAT10. The largest are SAT8, which encodes a putative polyketide synthase (PKS) with a conventional non-reducing architecture, and SAT10, a putative protein containing four ankyrin repeats and thus may be involved in protein scaffolding. The putative short-chain reductase SAT3 may assist the PKS in some capacity. SAT6 contains a secretory lipase domain and acts probably as a trichothecene esterase. SAT5 encodes a putative acetyltransferase, and so, with SAT6, may affect endogenous protection from toxicity. The probable transcription factor SAT9 may regulate the expression of the SC1 cluster. SC2 encodes proteins SAT11 to SAT16, the largest of which encodes the putative reducing PKS SAT13. SAT11 is a cytochrome P450 monooxygenase, while SAT14 and SAT16 are probable acetyltransferases. The SC2 cluster may be regulated by the transcription factor SAT15. SC3 is a small cluster that encodes 5 proteins, SAT17 to SAT21. SAT21 is a putative MFS-type transporter which may have a role in exporting secondary metabolites. The four other proteins putatively encoded in SC3 include the taurine hydroxylase-like protein SAT17, the O-methyltransferase SAT18, the acetyltransferase SAT19, and the Cys6-type zinc finger SAT20, the latter being probably involved in regulation of SC3 expression. The protein is Non-reducing polyketide synthase SAT8 of Stachybotrys chartarum (strain CBS 109288 / IBT 7711) (Toxic black mold).